Here is a 723-residue protein sequence, read N- to C-terminus: MKKLWLMGLLLASFFTTVAQNNAQTKSNSDEEIDKKVATLISQMTLDEKIAEMTQDAPANERLGIPSMKYGEALHGLWLVLDYYGNTTVYPQAVAAASTWEPELIKKMASQTAREARALGVTHCYSPNLDVYAGDARYGRVEESYGEDPYLVSRMGVAFIEGLQGTGEEQFDENHVIATAKHFVGYPENRRGINGGFSDMSERRLREVYLPPFEAAVKEAGVGSVMPGHQDFNGVPCHMNTWLLKDILRDELGFDGFIVSDNNDVGRLETMHFIAENRTEAAILGLKAGVDMDLVIGKNVELATYHTNILKDTILKNPALMKYIDQATSRILTAKYKLGLFDAKPKKIDTETVETGTDEHREFALELAEKSIIMLKNDNNLLPLDVSKIKSLAVIGPNAHEERPKKGTYKLLGGYSGLPPYYVSVLDGLKKKVGEHVKINYAKGCDIDSFSKEGFPEAISAAKNSDAVVLVVGSSHKTCGEGGDRADLDLYGVQKELVEAIHKTGKPVIVVLINGRPLSINYIAENIPSILETWYGGMRAGDAVANVIFGDVNPGGKLTMSFPRDVGQVPVTYLERPDFIGSGKGQYRFSDKTPLFPFGFGLSYTTFKYGTPKLDNTSIAANGTTTVSVEVTNTGKVTGDEVVQMYVRDDYASVGRYLKMLKGFKRITLKPGETKTVSFKLGFDELNILNQDLKKVVEPGTFTISVGASSKADDLKTVSLTVK.

Positions M1 to A19 are cleaved as a signal peptide.

This sequence belongs to the glycosyl hydrolase 3 family.

The protein localises to the periplasm. Its function is as follows. Xylosidase involved in ulvan degradation. Ulvan is the main polysaccharide component of the Ulvales (green seaweed) cell wall. It is composed of disaccharide building blocks comprising 3-sulfated rhamnose (Rha3S) linked to D-glucuronic acid (GlcA), L-iduronic acid (IduA), or D-xylose (Xyl). Beta-xylosidase converts Xyl-Rha3S, a product of alpha-L-rhamnosidase acting on Rha-Xyl-Rha3S oligosaccharides, further to Xyl and Rha3S. The enzyme is able to degrade 4-methylumbelliferyl-beta-D-xylopyranoside (MUX) in vitro. This is Beta-xylosidase from Formosa agariphila (strain DSM 15362 / KCTC 12365 / LMG 23005 / KMM 3901 / M-2Alg 35-1).